The sequence spans 62 residues: uncharacterized protein (62 aa).

The stretch at 28–61 (KIESTHPEIAKKLKEAAEKYREVEEILKKAVDMV) forms a coiled coil.

This is an uncharacterized protein from Archaeoglobus fulgidus (strain ATCC 49558 / DSM 4304 / JCM 9628 / NBRC 100126 / VC-16).